A 380-amino-acid chain; its full sequence is Chorismate synthase (380 aa).

Residue R48 coordinates NADP(+). FMN contacts are provided by residues 126 to 128 (HFS), G300, 315 to 319 (KPISS), and R342.

The protein belongs to the chorismate synthase family. Homotetramer. Requires FMNH2 as cofactor.

The catalysed reaction is 5-O-(1-carboxyvinyl)-3-phosphoshikimate = chorismate + phosphate. It functions in the pathway metabolic intermediate biosynthesis; chorismate biosynthesis; chorismate from D-erythrose 4-phosphate and phosphoenolpyruvate: step 7/7. Its function is as follows. Catalyzes the anti-1,4-elimination of the C-3 phosphate and the C-6 proR hydrogen from 5-enolpyruvylshikimate-3-phosphate (EPSP) to yield chorismate, which is the branch point compound that serves as the starting substrate for the three terminal pathways of aromatic amino acid biosynthesis. This reaction introduces a second double bond into the aromatic ring system. The polypeptide is Chorismate synthase (Lancefieldella parvula (strain ATCC 33793 / DSM 20469 / CCUG 32760 / JCM 10300 / KCTC 3663 / VPI 0546 / 1246) (Atopobium parvulum)).